The chain runs to 182 residues: Probable nicotinate-nucleotide adenylyltransferase (182 aa).

Belongs to the NadD family.

The catalysed reaction is nicotinate beta-D-ribonucleotide + ATP + H(+) = deamido-NAD(+) + diphosphate. It participates in cofactor biosynthesis; NAD(+) biosynthesis; deamido-NAD(+) from nicotinate D-ribonucleotide: step 1/1. Catalyzes the reversible adenylation of nicotinate mononucleotide (NaMN) to nicotinic acid adenine dinucleotide (NaAD). This Aliarcobacter butzleri (strain RM4018) (Arcobacter butzleri) protein is Probable nicotinate-nucleotide adenylyltransferase.